A 192-amino-acid polypeptide reads, in one-letter code: MGKGCKVVVCGLLSVGKTAILEQLLYGNHTIGMEDCETMEDVYMASVETDRGVKEQLHLYDTRGLQEGVELPKHYFSFADGFVLVYSVNNLESFQRVELLKKEIDKFKDKKEVAIVVLGNKIDLSEQRQVDAEVAQQWAKSEKVRLWEVTVTDRKTLIEPFTLLASKLSQPQSKSSFPLPGRKNKGNSSSEN.

11 to 18 (GLLSVGKT) provides a ligand contact to GTP. The short motif at 35-43 (DCETMEDVY) is the Effector region element. Residues 58–93 (HLYDTRGLQEGVELPKHYFSFADGFVLVYSVNNLES) are interactions with NFKBIA and NFKBIB. GTP is bound by residues 61–65 (DTRGL) and 120–123 (NKID). The disordered stretch occupies residues 168–192 (LSQPQSKSSFPLPGRKNKGNSSSEN).

This sequence belongs to the small GTPase superfamily. Ras family. KappaB-Ras subfamily. Interacts with both NF-kappa-B inhibitor alpha (NFKBIA) and beta (NFKBIB) in vitro. However, it probably only interacts with NFKBIB in vivo. Forms a complex with NFKBIB and NF-kappa-B heterodimer (p50/NFKB1 and p65/RELA). Also interacts with c-Rel (REL).

The protein localises to the cytoplasm. Its function is as follows. Atypical Ras-like protein that acts as a potent regulator of NF-kappa-B activity by preventing the degradation of NF-kappa-B inhibitor beta (NFKBIB) by most signals, explaining why NFKBIB is more resistant to degradation. May act by blocking phosphorylation of NFKBIB and mediating cytoplasmic retention of p65/RELA NF-kappa-B subunit. It is unclear whether it acts as a GTPase. Both GTP- and GDP-bound forms block phosphorylation of NFKBIB. This Macaca fascicularis (Crab-eating macaque) protein is NF-kappa-B inhibitor-interacting Ras-like protein 1 (NKIRAS1).